The primary structure comprises 369 residues: Protein HGH1 homolog (369 aa).

It belongs to the HGH1 family.

The polypeptide is Protein HGH1 homolog (Drosophila melanogaster (Fruit fly)).